A 58-amino-acid chain; its full sequence is Mesomartoxin (58 aa).

A signal peptide spans 1 to 29; sequence MMSRLSVFILIALVLSVIIDVLNNSKVEG. 3 cysteine pairs are disulfide-bonded: Cys-31–Cys-49, Cys-35–Cys-54, and Cys-39–Cys-56.

This sequence belongs to the short scorpion toxin superfamily. Potassium channel inhibitor family. Alpha-KTx 26 subfamily. In terms of tissue distribution, expressed by the venom gland.

The protein resides in the secreted. Functionally, recombinant toxin that reversibly blocks the voltage-gated potassium channels Shaker (IC(50)=0.054 nM), rKv1.2/KCNA2 (IC(50)=15.6 nM), and rKv1.3/KCNA3 (IC(50)=12.5 uM). This is Mesomartoxin from Olivierus martensii (Manchurian scorpion).